Reading from the N-terminus, the 293-residue chain is Extracellular metalloprotease MGYG_00389 (293 aa).

Residues 1 to 19 (MRFSVFLPAIAALSSAVAA) form the signal peptide. Asn49 and Asn53 each carry an N-linked (GlcNAc...) asparagine glycan. Residue His184 coordinates Zn(2+). Residue Glu185 is part of the active site. His188 is a binding site for Zn(2+). The cysteines at positions 223 and 249 are disulfide-linked. The segment at 270–293 (GSGSGSVTRPRPKPPVLMDYEHRL) is disordered.

The protein belongs to the peptidase M43B family.

The protein localises to the secreted. Its function is as follows. Secreted metalloproteinase that allows assimilation of proteinaceous substrates. Plays a pivotal role as a pathogenicity determinant during infections and contributes to the ability of the pathogen to persist within the mammalian host. This chain is Extracellular metalloprotease MGYG_00389, found in Arthroderma gypseum (strain ATCC MYA-4604 / CBS 118893) (Microsporum gypseum).